Consider the following 400-residue polypeptide: Argininosuccinate synthase (400 aa).

8-16 (AYSGGLDTS) is an ATP binding site. L-citrulline is bound at residue tyrosine 87. An ATP-binding site is contributed by glycine 117. The L-aspartate site is built by threonine 119, asparagine 123, and aspartate 124. Asparagine 123 serves as a coordination point for L-citrulline. Residues arginine 127, serine 175, glutamate 260, and tyrosine 272 each coordinate L-citrulline.

This sequence belongs to the argininosuccinate synthase family. Type 1 subfamily. As to quaternary structure, homotetramer.

Its subcellular location is the cytoplasm. It catalyses the reaction L-citrulline + L-aspartate + ATP = 2-(N(omega)-L-arginino)succinate + AMP + diphosphate + H(+). It participates in amino-acid biosynthesis; L-arginine biosynthesis; L-arginine from L-ornithine and carbamoyl phosphate: step 2/3. The sequence is that of Argininosuccinate synthase from Nocardia farcinica (strain IFM 10152).